Reading from the N-terminus, the 656-residue chain is Putative cysteine-rich receptor-like protein kinase 32 (656 aa).

Residues 1-23 form the signal peptide; sequence MCLQNLLSILCFVLAISFGYVSA. 2 Gnk2-homologous domains span residues 24–126 and 134–238; these read QKCV…NSSF and PTMV…GSEY. Residues 24-262 lie on the Extracellular side of the membrane; sequence QKCVDSMFFR…PDGKTISTGA (239 aa). N-linked (GlcNAc...) asparagine glycans are attached at residues Asn35, Asn52, Asn61, Asn103, and Asn123. The helical transmembrane segment at 263–283 threads the bilayer; it reads IVAVVVSVVIFVVLLALVLVI. Residues 284–656 lie on the Cytoplasmic side of the membrane; sequence RKRRQSYKTL…SASITRVTPR (373 aa). One can recognise a Protein kinase domain in the interval 321-606; sequence FSRNNKLGKG…IFQMLTNSSI (286 aa). ATP contacts are provided by residues 327 to 335 and Lys349; that span reads LGKGGFGEV. At Tyr394 the chain carries Phosphotyrosine. Residue Asp454 is the Proton acceptor of the active site. Ser458 carries the phosphoserine modification. Position 494 is a phosphothreonine (Thr494). Tyr502 is modified (phosphotyrosine).

The protein belongs to the protein kinase superfamily. Ser/Thr protein kinase family. CRK subfamily.

The protein resides in the membrane. The enzyme catalyses L-seryl-[protein] + ATP = O-phospho-L-seryl-[protein] + ADP + H(+). The catalysed reaction is L-threonyl-[protein] + ATP = O-phospho-L-threonyl-[protein] + ADP + H(+). In Arabidopsis thaliana (Mouse-ear cress), this protein is Putative cysteine-rich receptor-like protein kinase 32 (CRK32).